Here is a 378-residue protein sequence, read N- to C-terminus: MSHLDNGFRSLTLQRFPATDDVNPLQAWEAADEYLLQQLDDTEIPGPVLILNDAFGALSCALAEHKPYSIGDSYISELATRENLRLNGIDESSVKFLDSTADYPQQPGVVLIKVPKTLALLEQQLRALRKVVTSDTRIIAGAKARDIHTSTLELFEKVLGPTTTTLAWKKARLINCTFNEPPLADAPQTVSWKLEGTDWTIHNHANVFSRTGLDIGARFFMQHLPENLEGEIVDLGCGNGVIGLTLLDKNPQAKVVFVDESPMAVASSRLNVETNMPEALDRSEFMINNALSGVEPFRFNAVLCNPPFHQQHALTDNVAWEMFHYARRCLKINGELYIVANRHLDYFHKLKKIFGNCTTIATNNKFVVLKAVKLGRRR.

The protein belongs to the methyltransferase superfamily. RlmG family.

Its subcellular location is the cytoplasm. The enzyme catalyses guanosine(1835) in 23S rRNA + S-adenosyl-L-methionine = N(2)-methylguanosine(1835) in 23S rRNA + S-adenosyl-L-homocysteine + H(+). Its function is as follows. Specifically methylates the guanine in position 1835 (m2G1835) of 23S rRNA. The chain is Ribosomal RNA large subunit methyltransferase G from Shigella flexneri serotype 5b (strain 8401).